Reading from the N-terminus, the 67-residue chain is UPF0434 protein Patl_1782 (67 aa).

The protein belongs to the UPF0434 family.

The protein is UPF0434 protein Patl_1782 of Pseudoalteromonas atlantica (strain T6c / ATCC BAA-1087).